Reading from the N-terminus, the 429-residue chain is MSNVTVIGTQWGDEGKGKIVDWLASRADIVVRFQGGHNAGHTLVVGDQIYKLSLLPSGLVRGKIGVIGNGVVVDPKALMTEIDRVTAQGLVVTPETLWIAENAPLILPVHGALDRAREAARGDHKIGTTGRGIGPAYEDKVARRAIRICDLAEPETLDWKLDELLLHHNTLLAGLGAETFTKEQLKDFLAEITPRLLPFSCQVWDRLDEARRAGRRILFEGAQAVMLDVDHGTYPFVTSSNTVAAVAASGSGVSPSSVGFVLGIAKAYTTRVGEGPFPTELHDQTGRTLGERGHEFGTVTGRPRRCGWFDAVLIRRAVRVGGVSGIALTKLDVLDGLDEISICVGYELDGQKIETFPSAPGAQTRVKPVYETMPGWKETTAGARSWAELPAQAIKYVRRIEELIEAPVTLLSTSPERDDTILMRDPFED.

Residues 12–18 (GDEGKGK) and 40–42 (GHT) each bind GTP. Residue Asp-13 is the Proton acceptor of the active site. Residues Asp-13 and Gly-40 each contribute to the Mg(2+) site. IMP is bound by residues 13–16 (DEGK), 38–41 (NAGH), Thr-129, Arg-143, Gln-223, Thr-238, and Arg-302. His-41 (proton donor) is an active-site residue. 298–304 (TVTGRPR) is a binding site for substrate. GTP contacts are provided by residues Arg-304, 330–332 (KLD), and 412–414 (STS).

It belongs to the adenylosuccinate synthetase family. Homodimer. Mg(2+) is required as a cofactor.

The protein localises to the cytoplasm. It carries out the reaction IMP + L-aspartate + GTP = N(6)-(1,2-dicarboxyethyl)-AMP + GDP + phosphate + 2 H(+). It functions in the pathway purine metabolism; AMP biosynthesis via de novo pathway; AMP from IMP: step 1/2. Functionally, plays an important role in the de novo pathway of purine nucleotide biosynthesis. Catalyzes the first committed step in the biosynthesis of AMP from IMP. In Gluconobacter oxydans (strain 621H) (Gluconobacter suboxydans), this protein is Adenylosuccinate synthetase.